A 382-amino-acid polypeptide reads, in one-letter code: MRSWRWSVSRIMRLFLRWFRLCPRRGHRKRSRVRDLWNYGMVVLKSLYYNVQTNSDTVLDCMFEPIYWLVDNMTRWFGVVFVCLVMALTSSVVVIVYLCVLPIIFSSYPVYWILWHLCYGHWNLLMVVFHYYKATTTQPGFPPQEKTDIPTVTICKKCIVPKPARTHHCSICNRCILKMDHHCPWLNNCVGHFNHRYFFSFCLFMTMGCVYCSISAKDMFLDAYNAIESGRYKGGASQGEAVPGAGLIYISFQHQSSYQTPPPAFTHQERMVHKSLVYLWVLTSSVAVALGALTLWHAILITRGETSVERHINRKERRRLKLRGKLFRNPYHHGRINNWRIFFGVEKGSDWLWRVLLPSTHPPLGDGLTWDCPAYKSSTTAI.

Residues 1–75 (MRSWRWSVSR…IYWLVDNMTR (75 aa)) lie on the Cytoplasmic side of the membrane. A helical membrane pass occupies residues 76-96 (WFGVVFVCLVMALTSSVVVIV). Over 97-107 (YLCVLPIIFSS) the chain is Lumenal. The chain crosses the membrane as a helical span at residues 108–130 (YPVYWILWHLCYGHWNLLMVVFH). The Cytoplasmic segment spans residues 131–196 (YYKATTTQPG…NNCVGHFNHR (66 aa)). A DHHC domain is found at 153-203 (TICKKCIVPKPARTHHCSICNRCILKMDHHCPWLNNCVGHFNHRYFFSFCL). The active-site S-palmitoyl cysteine intermediate is Cys183. A helical transmembrane segment spans residues 197–217 (YFFSFCLFMTMGCVYCSISAK). The Lumenal portion of the chain corresponds to 218 to 275 (DMFLDAYNAIESGRYKGGASQGEAVPGAGLIYISFQHQSSYQTPPPAFTHQERMVHKS). Residues 276–296 (LVYLWVLTSSVAVALGALTLW) form a helical membrane-spanning segment. Topologically, residues 297–382 (HAILITRGET…PAYKSSTTAI (86 aa)) are cytoplasmic.

Belongs to the DHHC palmitoyltransferase family.

It is found in the endoplasmic reticulum membrane. The enzyme catalyses L-cysteinyl-[protein] + hexadecanoyl-CoA = S-hexadecanoyl-L-cysteinyl-[protein] + CoA. Functionally, palmitoyl acyltransferase that mediates palmitoylation of proteins and is required during embryonic heart development. Involved in the proliferation of neural stem cells by regulating the FGF/ERK pathway. This is Palmitoyltransferase ZDHHC16B from Danio rerio (Zebrafish).